We begin with the raw amino-acid sequence, 105 residues long: Antimicrobial peptide 1 (105 aa).

A signal peptide spans 1–26 (METKRLAYVMFVLVCLFLAMAQPSQA). Disulfide bonds link C37–C93, C47–C105, and C49–C77.

As to expression, detected at higher levels in needles and twigs from canker-resistant seedlings than in needles from canker-susceptible plants. During summer, detected on cankered, healthy and marginal bark. During winter, detected at lower levels in cankered bark and bark from the canker margin than in healthy bark (at protein level).

The protein resides in the secreted. It is found in the cell wall. Antimicrobial peptide. The protein is Antimicrobial peptide 1 of Pinus monticola (Western white pine).